The following is an 89-amino-acid chain: Small ribosomal subunit protein uS15 (89 aa).

This sequence belongs to the universal ribosomal protein uS15 family. Part of the 30S ribosomal subunit. Forms a bridge to the 50S subunit in the 70S ribosome, contacting the 23S rRNA.

Functionally, one of the primary rRNA binding proteins, it binds directly to 16S rRNA where it helps nucleate assembly of the platform of the 30S subunit by binding and bridging several RNA helices of the 16S rRNA. Forms an intersubunit bridge (bridge B4) with the 23S rRNA of the 50S subunit in the ribosome. This is Small ribosomal subunit protein uS15 from Bradyrhizobium sp. (strain ORS 278).